The primary structure comprises 99 residues: NADH dehydrogenase [ubiquinone] 1 alpha subcomplex subunit 2 (99 aa).

Ala2 carries the N-acetylalanine modification. Cys24 and Cys58 are oxidised to a cystine. Lys64 is subject to N6-acetyllysine; alternate. Lys64 is modified (N6-succinyllysine; alternate). Residue Lys75 is modified to N6-acetyllysine.

This sequence belongs to the complex I NDUFA2 subunit family. In terms of assembly, complex I is composed of 45 different subunits.

Its subcellular location is the mitochondrion inner membrane. Functionally, accessory subunit of the mitochondrial membrane respiratory chain NADH dehydrogenase (Complex I), that is believed not to be involved in catalysis. Complex I functions in the transfer of electrons from NADH to the respiratory chain. The immediate electron acceptor for the enzyme is believed to be ubiquinone. This chain is NADH dehydrogenase [ubiquinone] 1 alpha subcomplex subunit 2 (NDUFA2), found in Bos taurus (Bovine).